A 432-amino-acid polypeptide reads, in one-letter code: Cytochrome c biogenesis protein CcsB (432 aa).

A run of 3 helical transmembrane segments spans residues 14–34 (LRIA…GTAI), 72–92 (SSWF…CSWR), and 162–182 (VGPM…VWGS).

The protein belongs to the Ccs1/CcsB family. May interact with CcsA.

The protein resides in the cellular thylakoid membrane. In terms of biological role, required during biogenesis of c-type cytochromes (cytochrome c6 and cytochrome f) at the step of heme attachment. The polypeptide is Cytochrome c biogenesis protein CcsB (Prochlorococcus marinus (strain MIT 9303)).